Here is a 558-residue protein sequence, read N- to C-terminus: Small ribosomal subunit protein bS1 (558 aa).

6 S1 motif domains span residues 21 to 87 (GSII…LSRE), 105 to 171 (SETV…VSRR), 192 to 260 (GMHV…LGLK), 277 to 347 (ETKL…LGLK), 364 to 434 (GVHV…LGIK), and 451 to 520 (GAII…LTIH).

This sequence belongs to the bacterial ribosomal protein bS1 family.

Its function is as follows. Binds mRNA; thus facilitating recognition of the initiation point. It is needed to translate mRNA with a short Shine-Dalgarno (SD) purine-rich sequence. This is Small ribosomal subunit protein bS1 (rpsA) from Buchnera aphidicola subsp. Acyrthosiphon pisum (strain APS) (Acyrthosiphon pisum symbiotic bacterium).